A 452-amino-acid chain; its full sequence is Phosphoglucosamine mutase (452 aa).

Ser-101 functions as the Phosphoserine intermediate in the catalytic mechanism. Mg(2+) is bound by residues Ser-101, Asp-241, Asp-243, and Asp-245. Ser-101 is subject to Phosphoserine.

Belongs to the phosphohexose mutase family. Mg(2+) serves as cofactor. In terms of processing, activated by phosphorylation.

It catalyses the reaction alpha-D-glucosamine 1-phosphate = D-glucosamine 6-phosphate. Catalyzes the conversion of glucosamine-6-phosphate to glucosamine-1-phosphate. This chain is Phosphoglucosamine mutase, found in Lactococcus lactis subsp. lactis (strain IL1403) (Streptococcus lactis).